We begin with the raw amino-acid sequence, 209 residues long: Uracil phosphoribosyltransferase (209 aa).

5-phospho-alpha-D-ribose 1-diphosphate contacts are provided by residues Arg79, Arg104, and 131–139 (DPMLATGHT). Uracil-binding positions include Ile194 and 199-201 (GDA). Asp200 contributes to the 5-phospho-alpha-D-ribose 1-diphosphate binding site.

The protein belongs to the UPRTase family. It depends on Mg(2+) as a cofactor.

The enzyme catalyses UMP + diphosphate = 5-phospho-alpha-D-ribose 1-diphosphate + uracil. It functions in the pathway pyrimidine metabolism; UMP biosynthesis via salvage pathway; UMP from uracil: step 1/1. With respect to regulation, allosterically activated by GTP. Catalyzes the conversion of uracil and 5-phospho-alpha-D-ribose 1-diphosphate (PRPP) to UMP and diphosphate. The polypeptide is Uracil phosphoribosyltransferase (Caulobacter sp. (strain K31)).